The sequence spans 1215 residues: Zinc finger SWIM domain-containing protein 6 (1215 aa).

Disordered regions lie at residues 1-46 (MAER…RPGP) and 133-161 (AAGG…SPAA). Gly residues-rich tracts occupy residues 18–38 (PGGG…GGGY) and 133–155 (AAGG…GGGS). An SWIM-type zinc finger spans residues 246–283 (CNVAISFDRCKITSVTCSCGNKDIFYCAHVVALSLYRI).

Its function is as follows. involved in nervous system development, important for striatal morphology and motor regulation. The chain is Zinc finger SWIM domain-containing protein 6 from Homo sapiens (Human).